Consider the following 365-residue polypeptide: Zinc finger TRAF-type-containing protein 1-A (365 aa).

Residues 1–56 (MSEEREAPGPLASSSAGLGAEVGQEEVPGGAGPARLLLLPSDSDGPPKKRLRSEAE) are disordered. The segment at 72-117 (CTVCLDLPKASVYQCTNGHLMCAGCFIHLLADSRLKEEQATCPNCR) adopts an RING-type; degenerate zinc-finger fold. The segment at 113-186 (CPNCRCEISK…PWEGPYHELT (74 aa)) adopts a TRAF-type zinc-finger fold.

The protein belongs to the ZFTRAF1 family.

It localises to the cytoplasm. This is Zinc finger TRAF-type-containing protein 1-A from Xenopus laevis (African clawed frog).